Consider the following 439-residue polypeptide: Cysteine--tRNA ligase (439 aa).

Cys26 contributes to the Zn(2+) binding site. The 'HIGH' region signature appears at 28-38 (PTVYNHVHIGN). Residues Cys206, His231, and Glu235 each contribute to the Zn(2+) site. A 'KMSKS' region motif is present at residues 263–267 (KMSKS). Lys266 lines the ATP pocket.

The protein belongs to the class-I aminoacyl-tRNA synthetase family. Monomer. The cofactor is Zn(2+).

Its subcellular location is the cytoplasm. It catalyses the reaction tRNA(Cys) + L-cysteine + ATP = L-cysteinyl-tRNA(Cys) + AMP + diphosphate. The chain is Cysteine--tRNA ligase from Malacoplasma penetrans (strain HF-2) (Mycoplasma penetrans).